The sequence spans 161 residues: Cyclic pyranopterin monophosphate synthase (161 aa).

Substrate is bound by residues Met75–His77 and Met114–Glu115. Asp129 is an active-site residue.

It belongs to the MoaC family. Homohexamer; trimer of dimers.

It carries out the reaction (8S)-3',8-cyclo-7,8-dihydroguanosine 5'-triphosphate = cyclic pyranopterin phosphate + diphosphate. Its pathway is cofactor biosynthesis; molybdopterin biosynthesis. In terms of biological role, catalyzes the conversion of (8S)-3',8-cyclo-7,8-dihydroguanosine 5'-triphosphate to cyclic pyranopterin monophosphate (cPMP). The polypeptide is Cyclic pyranopterin monophosphate synthase (Staphylococcus carnosus (strain TM300)).